Reading from the N-terminus, the 118-residue chain is Holo-[acyl-carrier-protein] synthase (118 aa).

Positions 8 and 58 each coordinate Mg(2+).

This sequence belongs to the P-Pant transferase superfamily. AcpS family. The cofactor is Mg(2+).

The protein resides in the cytoplasm. It carries out the reaction apo-[ACP] + CoA = holo-[ACP] + adenosine 3',5'-bisphosphate + H(+). In terms of biological role, transfers the 4'-phosphopantetheine moiety from coenzyme A to a Ser of acyl-carrier-protein. This chain is Holo-[acyl-carrier-protein] synthase, found in Streptococcus equi subsp. zooepidemicus (strain MGCS10565).